Reading from the N-terminus, the 542-residue chain is Phosphoenolpyruvate carboxykinase (ATP) (542 aa).

Residues Arg67, Tyr208, and Lys214 each coordinate substrate. ATP-binding positions include Lys214, His233, and 249-257 (GLSGTGKTT). Residues Lys214 and His233 each contribute to the Mn(2+) site. Mn(2+) is bound at residue Asp270. ATP contacts are provided by residues Glu298, Arg334, 450–451 (RI), and Thr456. Substrate is bound at residue Arg334.

This sequence belongs to the phosphoenolpyruvate carboxykinase (ATP) family. As to quaternary structure, monomer. Mn(2+) serves as cofactor.

It is found in the cytoplasm. It carries out the reaction oxaloacetate + ATP = phosphoenolpyruvate + ADP + CO2. Its pathway is carbohydrate biosynthesis; gluconeogenesis. Functionally, involved in the gluconeogenesis. Catalyzes the conversion of oxaloacetate (OAA) to phosphoenolpyruvate (PEP) through direct phosphoryl transfer between the nucleoside triphosphate and OAA. This Vibrio vulnificus (strain YJ016) protein is Phosphoenolpyruvate carboxykinase (ATP).